Reading from the N-terminus, the 439-residue chain is Maintenance of mitochondrial morphology protein 1 (439 aa).

Over 1 to 76 the chain is Lumenal; sequence MSQDLIETTA…NGNTWSFTQG (76 aa). Residues 77–97 traverse the membrane as a helical segment; the sequence is LVIGQVSVIFIIIVFVKFFVF. Topologically, residues 98–439 are cytoplasmic; that stretch reads ADSSSHIPTK…TPGEYVNSNI (342 aa). Disordered stretches follow at residues 125–145, 309–336, and 405–425; these read KHSNGQFANDGENEDDTSLDS, MNGYSKENANGDGASSSNNDEDEDDGGT, and REPVTKKTTTTPSTTVNGTSA. The 231-residue stretch at 165–395 folds into the SMP-LTD domain; the sequence is ASESLDWFNV…EPRFQVVRLP (231 aa). Low complexity-rich tracts occupy residues 315 to 326 and 410 to 424; these read ENANGDGASSSN and KKTTTTPSTTVNGTS.

Belongs to the MMM1 family. Homodimer. Component of the ER-mitochondria encounter structure (ERMES) or MDM complex, composed of MMM1, MDM10, MDM12 and MDM34. An MMM1 homodimer associates with one molecule of MDM12 on each side in a pairwise head-to-tail manner, and the SMP-LTD domains of MMM1 and MDM12 generate a continuous hydrophobic tunnel for phospholipid trafficking.

It localises to the endoplasmic reticulum membrane. Its function is as follows. Component of the ERMES/MDM complex, which serves as a molecular tether to connect the endoplasmic reticulum (ER) and mitochondria. Components of this complex are involved in the control of mitochondrial shape and protein biogenesis, and function in nonvesicular lipid trafficking between the ER and mitochondria. The MDM12-MMM1 subcomplex functions in the major beta-barrel assembly pathway that is responsible for biogenesis of all outer membrane beta-barrel proteins, and acts in a late step after the SAM complex. The MDM10-MDM12-MMM1 subcomplex further acts in the TOM40-specific pathway after the action of the MDM12-MMM1 complex. Essential for establishing and maintaining the structure of mitochondria and maintenance of mtDNA nucleoids. The protein is Maintenance of mitochondrial morphology protein 1 of Candida albicans (strain SC5314 / ATCC MYA-2876) (Yeast).